The chain runs to 348 residues: L-threonine 3-dehydrogenase (348 aa).

A Zn(2+)-binding site is contributed by cysteine 42. Residues threonine 44 and histidine 47 each act as charge relay system in the active site. The Zn(2+) site is built by histidine 67, glutamate 68, cysteine 97, cysteine 100, cysteine 103, and cysteine 111. Residues leucine 179, glutamate 199, arginine 204, 266-268 (LGL), and 291-292 (IT) each bind NAD(+).

It belongs to the zinc-containing alcohol dehydrogenase family. As to quaternary structure, homotetramer. Zn(2+) serves as cofactor.

It is found in the cytoplasm. It catalyses the reaction L-threonine + NAD(+) = (2S)-2-amino-3-oxobutanoate + NADH + H(+). It participates in amino-acid degradation; L-threonine degradation via oxydo-reductase pathway; glycine from L-threonine: step 1/2. Its function is as follows. Catalyzes the NAD(+)-dependent oxidation of L-threonine to 2-amino-3-ketobutyrate. To a lesser extent, also catalyzes the oxidation of L-serine, D-threonine, butan-2,3-diol, butan-1,2-diol, and propan-1,2-diol and cannot oxidize other L-amino acids. Cannot utilize NADP(H) instead of NAD(H). The sequence is that of L-threonine 3-dehydrogenase from Pyrococcus furiosus (strain ATCC 43587 / DSM 3638 / JCM 8422 / Vc1).